The primary structure comprises 480 residues: Alpha-glucosidase (480 aa).

Residue 4–70 coordinates NAD(+); the sequence is VKIGIIGAGS…ADLKFEKTMN (67 aa). The substrate site is built by Asp-119 and Asn-153. Residue Cys-174 coordinates Mn(2+). The Proton donor role is filled by His-175. Mn(2+) is bound at residue His-203. Residue Asp-260 is the Proton acceptor of the active site.

It belongs to the glycosyl hydrolase 4 family. In terms of assembly, homodimer. Requires NAD(+) as cofactor. It depends on Mn(2+) as a cofactor. Co(2+) serves as cofactor. The cofactor is Ni(2+).

The enzyme catalyses Hydrolysis of terminal, non-reducing (1-&gt;4)-linked alpha-D-glucose residues with release of alpha-D-glucose.. Its activity is regulated as follows. Inhibited by Hg(2+) ion and EDTA. Its function is as follows. Alpha-glycosidase with a very broad specificity. Hydrolyzes maltose and other small maltooligosaccharides but is inactive against the polymeric substrate starch. AglA is not specific with respect to the configuration at the C-4 position of its substrates because glycosidic derivatives of D-galactose are also hydrolyzed. Does not cleave beta-glycosidic bonds. This Thermotoga maritima (strain ATCC 43589 / DSM 3109 / JCM 10099 / NBRC 100826 / MSB8) protein is Alpha-glucosidase (aglA).